The primary structure comprises 1041 residues: Probable rhamnogalacturonate lyase C (1041 aa).

Positions 1-21 (MFASTLRKTFVFLGLATYSAA) are cleaved as a signal peptide. N-linked (GlcNAc...) asparagine glycosylation is found at Asn-28, Asn-94, Asn-116, Asn-142, Asn-231, Asn-283, Asn-528, and Asn-634. The disordered stretch occupies residues 703-728 (ISRPCPRKGGTRRRKKERKKEGKKQG). Residues 707–720 (CPRKGGTRRRKKER) show a composition bias toward basic residues. N-linked (GlcNAc...) asparagine glycosylation occurs at Asn-864.

It belongs to the polysaccharide lyase 4 family.

It localises to the secreted. It catalyses the reaction Endotype eliminative cleavage of L-alpha-rhamnopyranosyl-(1-&gt;4)-alpha-D-galactopyranosyluronic acid bonds of rhamnogalacturonan I domains in ramified hairy regions of pectin leaving L-rhamnopyranose at the reducing end and 4-deoxy-4,5-unsaturated D-galactopyranosyluronic acid at the non-reducing end.. Functionally, pectinolytic enzymes consist of four classes of enzymes: pectin lyase, polygalacturonase, pectin methylesterase and rhamnogalacturonase. Degrades the rhamnogalacturonan I (RG-I) backbone of pectin. This chain is Probable rhamnogalacturonate lyase C (rglC), found in Emericella nidulans (strain FGSC A4 / ATCC 38163 / CBS 112.46 / NRRL 194 / M139) (Aspergillus nidulans).